A 1228-amino-acid polypeptide reads, in one-letter code: Nitrate reductase alpha chain (1228 aa).

In terms of domain architecture, 4Fe-4S Mo/W bis-MGD-type spans 47 to 111 (DKVVRSTHGV…SFSWYIYSPL (65 aa)). Residues His-54, Cys-58, Cys-62, and Cys-97 each contribute to the [4Fe-4S] cluster site. Mo-bis(molybdopterin guanine dinucleotide) is bound at residue Asp-227.

It belongs to the prokaryotic molybdopterin-containing oxidoreductase family. [4Fe-4S] cluster serves as cofactor. Requires Mo-bis(molybdopterin guanine dinucleotide) as cofactor.

Its subcellular location is the cell membrane. It carries out the reaction nitrate + a quinol = a quinone + nitrite + H2O. Its function is as follows. The alpha chain is the actual site of nitrate reduction. The chain is Nitrate reductase alpha chain (narG) from Bacillus subtilis (strain 168).